We begin with the raw amino-acid sequence, 845 residues long: Taste receptor type 1 member 3 (845 aa).

The signal sequence occupies residues 1 to 18 (MAGLMLLSLMALLGLGAG). Over 19-568 (APLCLSRQLR…FLAWGQPAVL (550 aa)) the chain is Extracellular. 2 N-linked (GlcNAc...) asparagine glycosylation sites follow: Asn-128 and Asn-262. A helical transmembrane segment spans residues 569-589 (VLLILLALALGLVLVALGLFI). The Cytoplasmic segment spans residues 590–601 (RHRDSPLVQASG). The helical transmembrane segment at 602-622 (GPRACFGLACLGLVCLSVLLF) threads the bilayer. Residues 623-637 (PGQPGPASCLAQQPL) are Extracellular-facing. Residues 638 to 658 (LHLPLTGCLSTLFLQAAQIFV) traverse the membrane as a helical segment. The Cytoplasmic portion of the chain corresponds to 659 to 680 (GSELPSSWADQLRRCLQGPWAW). A helical membrane pass occupies residues 681 to 701 (LLVLLALLAEAALCAWYLVAF). At 702-727 (PPEVVTDWWVLPTQVLVHCRMRSWIS) the chain is on the extracellular side. A helical transmembrane segment spans residues 728 to 748 (FGLLHAINAMLAFLCFLGTFL). The Cytoplasmic segment spans residues 749–760 (VQSRPGRYNGAR). The chain crosses the membrane as a helical span at residues 761–781 (GLTFAMLAYFITWISFVPLFA). Residues 782–789 (NVHVAYQP) are Extracellular-facing. A helical membrane pass occupies residues 790–810 (TVQMAAILLCALGILATFHLP). The Cytoplasmic segment spans residues 811 to 845 (KCYLLLQQLELNNPEFFLGDDARGQGSSGSGGKET).

Belongs to the G-protein coupled receptor 3 family. TAS1R subfamily. In terms of assembly, forms homodimers or heterodimers with TAS1R1 and TAS1R2.

The protein resides in the cell membrane. Its function is as follows. Putative taste receptor. TAS1R1/TAS1R3 responds to the umami taste stimulus (the taste of monosodium glutamate). TAS1R2/TAS1R3 recognizes diverse natural and synthetic sweeteners. TAS1R3 is essential for the recognition and response to the disaccharide trehalose. Sequence differences within and between species can significantly influence the selectivity and specificity of taste responses. This chain is Taste receptor type 1 member 3 (TAS1R3), found in Canis lupus familiaris (Dog).